The chain runs to 360 residues: Protein phosphatase 1L (360 aa).

Residues 1-25 are Extracellular-facing; it reads MIEDTMTLLSLLGRIMRYFLLRPET. The chain crosses the membrane as a helical span at residues 26 to 42; sequence LFLLCISLALWSYFFHT. Residues 43–360 lie on the Cytoplasmic side of the membrane; that stretch reads DEVKTIVKSS…FRNSSKTEEQ (318 aa). Positions 92 to 351 constitute a PPM-type phosphatase domain; sequence NVAVYSIQGR…DNITVMVVKF (260 aa). Mn(2+)-binding residues include Asp128, Gly129, Asp302, and Asp342.

Belongs to the PP2C family. In terms of assembly, interacts with MAP3K7/TAK1. Interacts with MAP3K5. It depends on Mg(2+) as a cofactor. The cofactor is Mn(2+). Ubiquitous. Highly expressed in heart, placenta, lung, liver, kidney and pancreas.

The protein localises to the membrane. The enzyme catalyses O-phospho-L-seryl-[protein] + H2O = L-seryl-[protein] + phosphate. It catalyses the reaction O-phospho-L-threonyl-[protein] + H2O = L-threonyl-[protein] + phosphate. In terms of biological role, acts as a suppressor of the SAPK signaling pathways by associating with and dephosphorylating MAP3K7/TAK1 and MAP3K5, and by attenuating the association between MAP3K7/TAK1 and MAP2K4 or MAP2K6. The chain is Protein phosphatase 1L (PPM1L) from Homo sapiens (Human).